We begin with the raw amino-acid sequence, 208 residues long: MSAKGGAIKDKWKMKKWYSVITPKAFGEVSLGSTPAYDITQTIGRRVETTLYDLTGDFSQVYVHLYFKIIGNEGDRLITRFVGHELSRDYLRSLIRRKSSKINSIFDVTTKDGYVVRVKGLVLTTYKCHQSQKTAIRKIINETVSKKASELSFDDFTQEVVFGRLANEIFEAAKKIYPLRKAEIEKTKVLKVPENLGKQVESSSVSSG.

Belongs to the eukaryotic ribosomal protein eS1 family.

The polypeptide is Small ribosomal subunit protein eS1 (Saccharolobus solfataricus (strain ATCC 35092 / DSM 1617 / JCM 11322 / P2) (Sulfolobus solfataricus)).